Here is a 417-residue protein sequence, read N- to C-terminus: UDP-N-acetylglucosamine 1-carboxyvinyltransferase (417 aa).

22-23 (KN) contacts phosphoenolpyruvate. Arginine 91 lines the UDP-N-acetyl-alpha-D-glucosamine pocket. Cysteine 115 acts as the Proton donor in catalysis. Residue cysteine 115 is modified to 2-(S-cysteinyl)pyruvic acid O-phosphothioketal. Residues 120-124 (RPVDL), aspartate 304, and isoleucine 326 contribute to the UDP-N-acetyl-alpha-D-glucosamine site.

Belongs to the EPSP synthase family. MurA subfamily.

It localises to the cytoplasm. It catalyses the reaction phosphoenolpyruvate + UDP-N-acetyl-alpha-D-glucosamine = UDP-N-acetyl-3-O-(1-carboxyvinyl)-alpha-D-glucosamine + phosphate. It participates in cell wall biogenesis; peptidoglycan biosynthesis. In terms of biological role, cell wall formation. Adds enolpyruvyl to UDP-N-acetylglucosamine. This Nitratidesulfovibrio vulgaris (strain ATCC 29579 / DSM 644 / CCUG 34227 / NCIMB 8303 / VKM B-1760 / Hildenborough) (Desulfovibrio vulgaris) protein is UDP-N-acetylglucosamine 1-carboxyvinyltransferase.